We begin with the raw amino-acid sequence, 316 residues long: MSGNSSTPNQGINCDPSYSYVMENFKYFVQVAYLAPAVFLYSRILYVVWVQHKKSYGYHPFFMVYSMVGLILVLLDIFITRLFVYVPQLCLPAAQFFISNPFLMELYYPLLNYLHCAQPFIQIFLTTNRMSSVLWPVDHEKFWKINFSRILILNLIAPFFFIWNTIISKKVLIFYFGGFYINYLKIIPWASMSLFLFIIRSAVVMITVVTTSITFWKMSHMKNRLKKSEGTLCKACAANSICFLVPAVFEAMKVLNTDWGKHWLAYLVQPFAWDVLNVGSPLVMIFASGQLRTHAFNIKRPVLKRSNSILVSSMTN.

The next 7 helical transmembrane spans lie at 28-48, 60-80, 106-126, 147-167, 186-206, 235-255, and 267-287; these read FVQVAYLAPAVFLYSRILYVV, PFFMVYSMVGLILVLLDIFIT, LYYPLLNYLHCAQPFIQIFLT, FSRILILNLIAPFFFIWNTII, IIPWASMSLFLFIIRSAVVMI, ACAANSICFLVPAVFEAMKVL, and LVQPFAWDVLNVGSPLVMIFA.

The protein belongs to the nematode receptor-like protein srg family.

It localises to the membrane. The protein is Serpentine receptor class gamma-8 (srg-8) of Caenorhabditis elegans.